The sequence spans 281 residues: 4-diphosphocytidyl-2-C-methyl-D-erythritol kinase (281 aa).

Residue Lys-15 is part of the active site. 98–108 contacts ATP; sequence PTGAGLGGGSS. The active site involves Asp-140.

It belongs to the GHMP kinase family. IspE subfamily.

The catalysed reaction is 4-CDP-2-C-methyl-D-erythritol + ATP = 4-CDP-2-C-methyl-D-erythritol 2-phosphate + ADP + H(+). Its pathway is isoprenoid biosynthesis; isopentenyl diphosphate biosynthesis via DXP pathway; isopentenyl diphosphate from 1-deoxy-D-xylulose 5-phosphate: step 3/6. In terms of biological role, catalyzes the phosphorylation of the position 2 hydroxy group of 4-diphosphocytidyl-2C-methyl-D-erythritol. The polypeptide is 4-diphosphocytidyl-2-C-methyl-D-erythritol kinase (Neisseria gonorrhoeae (strain ATCC 700825 / FA 1090)).